A 98-amino-acid polypeptide reads, in one-letter code: Integration host factor subunit beta (98 aa).

It belongs to the bacterial histone-like protein family. Heterodimer of an alpha and a beta chain.

Functionally, this protein is one of the two subunits of integration host factor, a specific DNA-binding protein that functions in genetic recombination as well as in transcriptional and translational control. The protein is Integration host factor subunit beta of Pseudomonas fluorescens (strain Pf0-1).